A 227-amino-acid chain; its full sequence is Ribosomal RNA large subunit methyltransferase E (227 aa).

The S-adenosyl-L-methionine site is built by G78, W80, D103, D119, and D143. K183 (proton acceptor) is an active-site residue.

It belongs to the class I-like SAM-binding methyltransferase superfamily. RNA methyltransferase RlmE family.

The protein localises to the cytoplasm. The catalysed reaction is uridine(2552) in 23S rRNA + S-adenosyl-L-methionine = 2'-O-methyluridine(2552) in 23S rRNA + S-adenosyl-L-homocysteine + H(+). Specifically methylates the uridine in position 2552 of 23S rRNA at the 2'-O position of the ribose in the fully assembled 50S ribosomal subunit. The chain is Ribosomal RNA large subunit methyltransferase E from Rickettsia akari (strain Hartford).